Reading from the N-terminus, the 264-residue chain is Indolethylamine N-methyltransferase (264 aa).

Position 14 is an N6-succinyllysine (Lys14). Residues Tyr21, Tyr26, 64–65, Tyr70, Asp86, and Asn91 contribute to the S-adenosyl-L-methionine site; that span reads GS. Lys97 bears the N6-succinyllysine mark. S-adenosyl-L-methionine contacts are provided by residues 143 to 144 and Phe164; that span reads DV.

The protein belongs to the class I-like SAM-binding methyltransferase superfamily. NNMT/PNMT/TEMT family. In terms of assembly, monomer. Detected in lung and liver (at protein level).

The protein localises to the cytoplasm. It catalyses the reaction a tertiary amine + S-adenosyl-L-methionine = a methylated tertiary amine + S-adenosyl-L-homocysteine + H(+). The catalysed reaction is a secondary amine + S-adenosyl-L-methionine = a methylated secondary amine + S-adenosyl-L-homocysteine + H(+). The enzyme catalyses a primary amine + S-adenosyl-L-methionine = a methylated primary amine + S-adenosyl-L-homocysteine + H(+). It carries out the reaction dimethyl sulfide + S-adenosyl-L-methionine = trimethylsulfonium + S-adenosyl-L-homocysteine. Its activity is regulated as follows. Inhibited by the S-adenosyl-L-methionine analog sinefungin and by the product S-adenosyl-L-homocysteine. In terms of biological role, catalyzes the N-methylation of tryptamine and structurally related compounds. Functions as a thioether S-methyltransferase and is active with a variety of thioethers and the corresponding selenium and tellurium compounds, including 3-methylthiopropionaldehyde, dimethyl selenide, dimethyl telluride, 2-methylthioethylamine, 2-methylthioethanol, methyl-n-propyl sulfide and diethyl sulfide. Plays an important role in the detoxification of selenium compounds. This is Indolethylamine N-methyltransferase (Inmt) from Mus musculus (Mouse).